A 298-amino-acid chain; its full sequence is Aspartate carbamoyltransferase catalytic subunit (298 aa).

Arg50 and Thr51 together coordinate carbamoyl phosphate. Lys79 contributes to the L-aspartate binding site. The carbamoyl phosphate site is built by Arg100, His128, and Gln131. Residues Arg160 and Arg221 each contribute to the L-aspartate site. Carbamoyl phosphate contacts are provided by Leu260 and Pro261.

Belongs to the aspartate/ornithine carbamoyltransferase superfamily. ATCase family. Heterooligomer of catalytic and regulatory chains.

It carries out the reaction carbamoyl phosphate + L-aspartate = N-carbamoyl-L-aspartate + phosphate + H(+). Its pathway is pyrimidine metabolism; UMP biosynthesis via de novo pathway; (S)-dihydroorotate from bicarbonate: step 2/3. In terms of biological role, catalyzes the condensation of carbamoyl phosphate and aspartate to form carbamoyl aspartate and inorganic phosphate, the committed step in the de novo pyrimidine nucleotide biosynthesis pathway. In Methanoculleus marisnigri (strain ATCC 35101 / DSM 1498 / JR1), this protein is Aspartate carbamoyltransferase catalytic subunit.